Consider the following 159-residue polypeptide: Ribosomal RNA large subunit methyltransferase H (159 aa).

Residues Leu-76, Gly-108, and 127 to 132 (FSKMTL) contribute to the S-adenosyl-L-methionine site.

This sequence belongs to the RNA methyltransferase RlmH family. Homodimer.

The protein localises to the cytoplasm. It carries out the reaction pseudouridine(1915) in 23S rRNA + S-adenosyl-L-methionine = N(3)-methylpseudouridine(1915) in 23S rRNA + S-adenosyl-L-homocysteine + H(+). Specifically methylates the pseudouridine at position 1915 (m3Psi1915) in 23S rRNA. This chain is Ribosomal RNA large subunit methyltransferase H, found in Bacillus cereus (strain ATCC 10987 / NRS 248).